Here is a 674-residue protein sequence, read N- to C-terminus: Inactivation-no-after-potential D protein (674 aa).

Residues 17–106 (MVTLDKTGKK…KIELEIQTFD (90 aa)) enclose the PDZ 1 domain. Positions 133–192 (QTTNNNASGGQGMGQGQGQGQGMAGMNRQQSMQKRNTTFTASMRQKHSNYADEDDEDTRD) are disordered. Residues 141-155 (GGQGMGQGQGQGQGM) are compositionally biased toward gly residues. The span at 159-175 (NRQQSMQKRNTTFTASM) shows a compositional bias: polar residues. 2 consecutive PDZ domains span residues 249-332 (RIEV…TSRR) and 364-448 (ARTV…LTLK). Residues 458-475 (AAEEKKKEEAKKEEEKPQ) show a composition bias toward basic and acidic residues. The disordered stretch occupies residues 458 to 481 (AAEEKKKEEAKKEEEKPQEPATAE). 2 PDZ domains span residues 489 to 577 (LIEL…RADP) and 584 to 664 (NVDL…TRPK). Phosphoserine is present on residues serine 598 and serine 600.

In terms of assembly, interacts with the C-terminus of trp, and with norpA and inaC to form the inaD signaling complex. Interacts with Fkbp59, which together with trpl, rhodopsin and calmodulin may also be part of the inaD complex. Post-translationally, phosphorylated by inaC. As to expression, expressed in photoreceptor cells (R cells) of the compound eyes and ocelli.

Its subcellular location is the cell projection. The protein localises to the rhabdomere. Involved in the negative feedback regulation of the light-activated signaling cascade in photoreceptors through a calcium-mediated process. Interacts with tetrapeptide ligand located in C-terminal sequence of 3 key components of the visual cascade, tethering them and forming a macromolecular signaling phototransduction complex. The chain is Inactivation-no-after-potential D protein (inaD) from Drosophila melanogaster (Fruit fly).